We begin with the raw amino-acid sequence, 748 residues long: Translation factor GUF1 homolog 2, mitochondrial (748 aa).

The transit peptide at 1 to 29 (MRVGCCLLLKPLRQRLCTASISSRHIMRW) directs the protein to the mitochondrion. One can recognise a tr-type G domain in the interval 94–276 (SHIRNVAVVA…AIIERVPPPT (183 aa)). GTP-binding positions include 103–110 (AHVDHGKT), 167–171 (DTPGH), and 221–224 (TKMD).

This sequence belongs to the TRAFAC class translation factor GTPase superfamily. Classic translation factor GTPase family. LepA subfamily.

It is found in the mitochondrion inner membrane. It catalyses the reaction GTP + H2O = GDP + phosphate + H(+). Promotes mitochondrial protein synthesis. May act as a fidelity factor of the translation reaction, by catalyzing a one-codon backward translocation of tRNAs on improperly translocated ribosomes. Binds to mitochondrial ribosomes in a GTP-dependent manner. In Trypanosoma cruzi (strain CL Brener), this protein is Translation factor GUF1 homolog 2, mitochondrial.